Consider the following 484-residue polypeptide: tRNA sulfurtransferase (484 aa).

In terms of domain architecture, THUMP spans 61–166 (PHLIELLQCI…DKLLFIQARH (106 aa)). ATP is bound by residues 183 to 184 (LI), K265, G287, and Q296. C344 and C456 form a disulfide bridge. The Rhodanese domain occupies 404–483 (LGENDVILDI…FNNVQVFVKA (80 aa)). C456 acts as the Cysteine persulfide intermediate in catalysis.

Belongs to the ThiI family.

It is found in the cytoplasm. The enzyme catalyses [ThiI sulfur-carrier protein]-S-sulfanyl-L-cysteine + a uridine in tRNA + 2 reduced [2Fe-2S]-[ferredoxin] + ATP + H(+) = [ThiI sulfur-carrier protein]-L-cysteine + a 4-thiouridine in tRNA + 2 oxidized [2Fe-2S]-[ferredoxin] + AMP + diphosphate. The catalysed reaction is [ThiS sulfur-carrier protein]-C-terminal Gly-Gly-AMP + S-sulfanyl-L-cysteinyl-[cysteine desulfurase] + AH2 = [ThiS sulfur-carrier protein]-C-terminal-Gly-aminoethanethioate + L-cysteinyl-[cysteine desulfurase] + A + AMP + 2 H(+). It participates in cofactor biosynthesis; thiamine diphosphate biosynthesis. In terms of biological role, catalyzes the ATP-dependent transfer of a sulfur to tRNA to produce 4-thiouridine in position 8 of tRNAs, which functions as a near-UV photosensor. Also catalyzes the transfer of sulfur to the sulfur carrier protein ThiS, forming ThiS-thiocarboxylate. This is a step in the synthesis of thiazole, in the thiamine biosynthesis pathway. The sulfur is donated as persulfide by IscS. This chain is tRNA sulfurtransferase, found in Actinobacillus succinogenes (strain ATCC 55618 / DSM 22257 / CCUG 43843 / 130Z).